Here is a 92-residue protein sequence, read N- to C-terminus: Kinetoplastid membrane protein 11 (92 aa).

It belongs to the KMP-11 family. As to quaternary structure, monomer.

It localises to the cytoplasm. The protein localises to the cytoskeleton. Its function is as follows. May be involved in the regulation of the cytoskeleton through interaction with the subpellicular microtubules. May be involved in parasite mobility and attachment to the surface of the host cell. Behaves as a strong immunogen during infection. In Trypanosoma brucei brucei, this protein is Kinetoplastid membrane protein 11 (KMP-11/1).